The chain runs to 108 residues: Large ribosomal subunit protein bL21c (108 aa).

This sequence belongs to the bacterial ribosomal protein bL21 family. As to quaternary structure, part of the 50S ribosomal subunit.

The protein resides in the plastid. It localises to the chloroplast. In terms of biological role, this protein binds to 23S rRNA. The chain is Large ribosomal subunit protein bL21c from Cyanidium caldarium (Red alga).